The chain runs to 248 residues: ATP synthase subunit a, chloroplastic (248 aa).

Transmembrane regions (helical) follow at residues 38 to 58, 96 to 116, 135 to 155, 200 to 220, and 221 to 241; these read QVLI…AIAV, VPFI…GALL, INTT…AGLT, LVVV…VMFL, and GLFT…AYIG.

It belongs to the ATPase A chain family. As to quaternary structure, F-type ATPases have 2 components, CF(1) - the catalytic core - and CF(0) - the membrane proton channel. CF(1) has five subunits: alpha(3), beta(3), gamma(1), delta(1), epsilon(1). CF(0) has four main subunits: a, b, b' and c.

It localises to the plastid. It is found in the chloroplast thylakoid membrane. In terms of biological role, key component of the proton channel; it plays a direct role in the translocation of protons across the membrane. This Nuphar advena (Common spatterdock) protein is ATP synthase subunit a, chloroplastic.